A 210-amino-acid chain; its full sequence is Large ribosomal subunit protein uL3 (210 aa).

A compositionally biased stretch (basic residues) spans 132-144; it reads GPMKHGSKYHRRP. The disordered stretch occupies residues 132 to 152; that stretch reads GPMKHGSKYHRRPGSAGAKGP.

It belongs to the universal ribosomal protein uL3 family. In terms of assembly, part of the 50S ribosomal subunit. Forms a cluster with proteins L14 and L19.

In terms of biological role, one of the primary rRNA binding proteins, it binds directly near the 3'-end of the 23S rRNA, where it nucleates assembly of the 50S subunit. The chain is Large ribosomal subunit protein uL3 from Heliobacterium modesticaldum (strain ATCC 51547 / Ice1).